The chain runs to 255 residues: 5'-nucleotidase SurE (255 aa).

A divalent metal cation contacts are provided by Asp-8, Asp-9, Ser-39, and Asn-95.

It belongs to the SurE nucleotidase family. Requires a divalent metal cation as cofactor.

It localises to the cytoplasm. It catalyses the reaction a ribonucleoside 5'-phosphate + H2O = a ribonucleoside + phosphate. In terms of biological role, nucleotidase that shows phosphatase activity on nucleoside 5'-monophosphates. The polypeptide is 5'-nucleotidase SurE (Rubrivivax gelatinosus (strain NBRC 100245 / IL144)).